The chain runs to 140 residues: Proline-rich nuclear receptor coactivator 2 (140 aa).

Residues 1-81 (MGGGERYNIP…NSNWNAGLSS (81 aa)) form a disordered region. Polar residues-rich tracts occupy residues 11–38 (DPQS…SQTK) and 59–81 (AMQN…GLSS). Residues 100–106 (SEPPSPS) carry the SH3-binding motif.

It belongs to the PNRC family. PNRC2 subfamily. Interacts with UPF1/RENT1; preferentially interacts with hyperphosphorylated form. Interacts with DCP1A. Interacts with many nuclear receptors including ESR1, ESRRA, ESRRG, NR3C1/GR, NR5A1, PGR, TR, RAR and RXR. As to expression, strong expression is detected in lung, spleen, ovary, thymus, and colon.

It is found in the nucleus. The protein resides in the cytoplasm. Its subcellular location is the P-body. Involved in nonsense-mediated mRNA decay (NMD) by acting as a bridge between the mRNA decapping complex and the NMD machinery. May act by targeting the NMD machinery to the P-body and recruiting the decapping machinery to aberrant mRNAs. Required for UPF1/RENT1 localization to the P-body. Plays a role in glucocorticoid receptor-mediated mRNA degradation by interacting with the glucocorticoid receptor NR3C1 in a ligand-dependent manner when it is bound to the 5' UTR of target mRNAs and recruiting the RNA helicase UPF1 and the mRNA-decapping enzyme DCP1A, leading to RNA decay. Also acts as a nuclear receptor coactivator. May play a role in controlling the energy balance between energy storage and energy expenditure. In Mus musculus (Mouse), this protein is Proline-rich nuclear receptor coactivator 2 (Pnrc2).